We begin with the raw amino-acid sequence, 641 residues long: Frizzled-1 (641 aa).

Residues 1-68 (MAEEAVPSES…WLLEAPLLLG (68 aa)) form the signal peptide. The Extracellular portion of the chain corresponds to 69 to 316 (VRAQPAGQVS…PEELRFSRTW (248 aa)). A disordered region spans residues 74–99 (AGQVSGPGQQRPPPPQPQQGGQQYNG). Residues 106–224 (PDHGYCQPIS…HGAGELCVGQ (119 aa)) form the FZ domain. Intrachain disulfides connect C111/C172, C119/C165, C156/C192, C182/C221, and C186/C209. N-linked (GlcNAc...) asparagine glycosylation occurs at N125. N225 is a glycosylation site (N-linked (GlcNAc...) asparagine). The chain crosses the membrane as a helical span at residues 317–337 (IGIWSVLCCASTLFTVLTYLV). At 338–348 (DMRRFSYPERP) the chain is on the cytoplasmic side. A helical transmembrane segment spans residues 349–369 (IIFLSGCYTAVAVAYIAGFLL). The Extracellular portion of the chain corresponds to 370–396 (EDRVVCNDKFAEDGARTVAQGTKKEGC). A helical membrane pass occupies residues 397–417 (TILFMMLYFFSMASSIWWVIL). Topologically, residues 418-439 (SLTWFLAAGMKWGHEAIEANSQ) are cytoplasmic. The chain crosses the membrane as a helical span at residues 440 to 460 (YFHLAAWAVPAIKTITILALG). Residues 461–483 (QVDGDVLSGVCFVGLNNVDALRG) lie on the Extracellular side of the membrane. The chain crosses the membrane as a helical span at residues 484-504 (FVLAPLFVYLFIGTSFLLAGF). Topologically, residues 505–530 (VSLFRIRTIMKHDGTKTEKLEKLMVR) are cytoplasmic. A helical transmembrane segment spans residues 531–551 (IGVFSVLYTVPATIVIACYFY). At 552 to 595 (EQAFRDQWERSWVAQSCKSYAIPCPHLQGGGGVPPHPPMSPDFT) the chain is on the extracellular side. Residues 596 to 616 (VFMIKYLMTLIVGITSGFWIW) traverse the membrane as a helical segment. At 617 to 641 (SGKTLNSWRKFYTRLTNSKQGETTV) the chain is on the cytoplasmic side. Residues 619–624 (KTLNSW) carry the Lys-Thr-X-X-X-Trp motif, mediates interaction with the PDZ domain of Dvl family members motif. Residues 639 to 641 (TTV) carry the PDZ-binding motif.

The protein belongs to the G-protein coupled receptor Fz/Smo family. As to quaternary structure, interacts with MYOC. Interacts with WNT7B. In terms of processing, ubiquitinated by ZNRF3, leading to its degradation by the proteasome. As to expression, widely expressed. Most abundant in kidney, liver, uterus, ovary and heart. Lower levels seen in brain and intestine. Extremely low in calvaria, mammary glands and testis.

It localises to the cell membrane. Receptor for Wnt proteins. Activated by WNT3A, WNT3, WNT1 and to a lesser extent WNT2, but apparently not by WNT4, WNT5A, WNT5B, WNT6 or WNT7A. Contradictory results have been reported for activation by WNT7B. Functions in the canonical Wnt/beta-catenin signaling pathway. The canonical Wnt/beta-catenin signaling pathway leads to the activation of disheveled proteins, inhibition of GSK-3 kinase, nuclear accumulation of beta-catenin and activation of Wnt target genes. A second signaling pathway involving PKC and calcium fluxes has been seen for some family members, but it is not yet clear if it represents a distinct pathway or if it can be integrated in the canonical pathway, as PKC seems to be required for Wnt-mediated inactivation of GSK-3 kinase. Both pathways seem to involve interactions with G-proteins. May be involved in transduction and intercellular transmission of polarity information during tissue morphogenesis and/or in differentiated tissues. The polypeptide is Frizzled-1 (Fzd1) (Rattus norvegicus (Rat)).